We begin with the raw amino-acid sequence, 370 residues long: ATP/GTP phosphatase (370 aa).

The enzyme catalyses ATP + H2O = ADP + phosphate + H(+). It catalyses the reaction GTP + H2O = GDP + phosphate + H(+). In terms of biological role, has nucleotide phosphatase activity toward ATP and GTP, but not toward CTP, TTP and ADP. The protein is ATP/GTP phosphatase of Helicobacter pylori (strain ATCC 700392 / 26695) (Campylobacter pylori).